A 177-amino-acid chain; its full sequence is Meiotic chromosome segregation protein C17A2.07c (177 aa).

Residues 71–90 (EDDSINKPTEEADEAPRTQL) are disordered. Basic and acidic residues predominate over residues 74-86 (SINKPTEEADEAP).

The protein localises to the nucleus. In terms of biological role, involved in meiotic chromosome segregation. This Schizosaccharomyces pombe (strain 972 / ATCC 24843) (Fission yeast) protein is Meiotic chromosome segregation protein C17A2.07c.